A 35-amino-acid chain; its full sequence is MTERKLLQLLRRPFISLSLFTALRACPLRPKSLIA.

A signal peptide spans 1-25; the sequence is MTERKLLQLLRRPFISLSLFTALRA.

This is an uncharacterized protein from Saccharomyces cerevisiae (strain ATCC 204508 / S288c) (Baker's yeast).